Consider the following 162-residue polypeptide: Putative pre-16S rRNA nuclease (162 aa).

This sequence belongs to the YqgF nuclease family.

It localises to the cytoplasm. Functionally, could be a nuclease involved in processing of the 5'-end of pre-16S rRNA. This chain is Putative pre-16S rRNA nuclease, found in Brucella abortus (strain S19).